Reading from the N-terminus, the 514-residue chain is Alanine--glyoxylate aminotransferase 2, mitochondrial (514 aa).

The transit peptide at 1–41 directs the protein to the mitochondrion; it reads MTLIWRHLLRPLCLVTSAPRILEMHPFLSLGTSRTSVTKLS. At Lys71 the chain carries N6-acetyllysine; alternate. Lys71 is subject to N6-succinyllysine; alternate. N6-acetyllysine is present on Lys84. Residue Lys262 is modified to N6-acetyllysine; alternate. The residue at position 262 (Lys262) is an N6-succinyllysine; alternate. Lys304 is modified (N6-succinyllysine). Lys350 is subject to N6-(pyridoxal phosphate)lysine. N6-acetyllysine; alternate is present on residues Lys417 and Lys420. N6-succinyllysine; alternate is present on residues Lys417 and Lys420.

The protein belongs to the class-III pyridoxal-phosphate-dependent aminotransferase family. Homotetramer. Pyridoxal 5'-phosphate is required as a cofactor. As to expression, expressed in the convoluted tubule in the kidney and in the liver hepatocytes (at protein level).

The protein resides in the mitochondrion. The catalysed reaction is glyoxylate + L-alanine = glycine + pyruvate. It catalyses the reaction (R)-3-amino-2-methylpropanoate + pyruvate = 2-methyl-3-oxopropanoate + L-alanine. It carries out the reaction 3-oxopropanoate + L-alanine = beta-alanine + pyruvate. The enzyme catalyses 2-oxobutanoate + L-alanine = (2S)-2-aminobutanoate + pyruvate. The catalysed reaction is N(omega),N(omega)-dimethyl-L-arginine + pyruvate = 5-(3,3-dimethylguanidino)-2-oxopentanoate + L-alanine. It catalyses the reaction N(omega),N('omega)-dimethyl-L-arginine + pyruvate = 5-(3,3'-dimethylguanidino)-2-oxopentanoate + L-alanine. It carries out the reaction N(omega),N(omega)-dimethyl-L-arginine + glyoxylate = 5-(3,3-dimethylguanidino)-2-oxopentanoate + glycine. The enzyme catalyses N(omega),N('omega)-dimethyl-L-arginine + glyoxylate = 5-(3,3'-dimethylguanidino)-2-oxopentanoate + glycine. The catalysed reaction is N(omega)-methyl-L-arginine + pyruvate = 5-(3-methylguanidino)-2-oxopentanoate + L-alanine. It catalyses the reaction N(omega)-methyl-L-arginine + glyoxylate = 5-(3-methylguanidino)-2-oxopentanoate + glycine. It carries out the reaction L-ornithine + pyruvate = 5-amino-2-oxopentanoate + L-alanine. The enzyme catalyses L-ornithine + glyoxylate = 5-amino-2-oxopentanoate + glycine. The catalysed reaction is (2S)-2-aminobutanoate + glyoxylate = 2-oxobutanoate + glycine. It catalyses the reaction N(omega),N(omega)-dimethyl-L-arginine + oxaloacetate = 5-(3,3-dimethylguanidino)-2-oxopentanoate + L-aspartate. It carries out the reaction oxaloacetate + L-alanine = L-aspartate + pyruvate. The enzyme catalyses N(omega),N(omega)-dimethyl-L-arginine + 2-oxobutanoate = 5-(3,3-dimethylguanidino)-2-oxopentanoate + (2S)-2-aminobutanoate. The catalysed reaction is 2-oxopentanoate + N(omega),N(omega)-dimethyl-L-arginine = 5-(3,3-dimethylguanidino)-2-oxopentanoate + L-2-aminopentanoate. It catalyses the reaction 2-oxohexanoate + N(omega),N(omega)-dimethyl-L-arginine = L-2-aminohexanoate + 5-(3,3-dimethylguanidino)-2-oxopentanoate. Multifunctional aminotransferase with a broad substrate specificity. Catalyzes the conversion of glyoxylate to glycine using alanine as the amino donor. Catalyzes metabolism of not L- but the D-isomer of D-beta-aminoisobutyric acid to generate 2-methyl-3-oxopropanoate and alanine. Catalyzes the transfer of the amino group from beta-alanine to pyruvate to yield L-alanine and 3-oxopropanoate. Can metabolize NG-monomethyl-L-arginine (NMMA), asymmetric NG,NG-dimethyl-L-arginine (ADMA) and symmetric NG,N'G-dimethyl-L-arginine (SDMA). ADMA is a potent inhibitor of nitric-oxide (NO) synthase, and this activity provides mechanism through which the kidney regulates blood pressure. This Homo sapiens (Human) protein is Alanine--glyoxylate aminotransferase 2, mitochondrial (AGXT2).